Here is a 395-residue protein sequence, read N- to C-terminus: Nicotinate phosphoribosyltransferase (395 aa).

At His-222 the chain carries Phosphohistidine; by autocatalysis.

The protein belongs to the NAPRTase family. Transiently phosphorylated on a His residue during the reaction cycle. Phosphorylation strongly increases the affinity for substrates and increases the rate of nicotinate D-ribonucleotide production. Dephosphorylation regenerates the low-affinity form of the enzyme, leading to product release.

It carries out the reaction nicotinate + 5-phospho-alpha-D-ribose 1-diphosphate + ATP + H2O = nicotinate beta-D-ribonucleotide + ADP + phosphate + diphosphate. It participates in cofactor biosynthesis; NAD(+) biosynthesis; nicotinate D-ribonucleotide from nicotinate: step 1/1. Catalyzes the synthesis of beta-nicotinate D-ribonucleotide from nicotinate and 5-phospho-D-ribose 1-phosphate at the expense of ATP. This is Nicotinate phosphoribosyltransferase from Polaromonas sp. (strain JS666 / ATCC BAA-500).